We begin with the raw amino-acid sequence, 944 residues long: Protein unc-45 homolog A (944 aa).

The segment at 1–25 (MTVSGPGTPEPRPSDPGASSAEELR) is disordered. TPR repeat units lie at residues 21–54 (AEEL…GATP), 58–91 (AILH…DGGD), and 92–125 (VKAL…EPKN). An N6-acetyllysine modification is found at lysine 70. Lysine 483 bears the N6-acetyllysine mark.

In terms of assembly, interacts with PGR isoforms A and B as well as with NR3C1 in the absence of ligand, and with HSP90AB1. Binding to HSP90AB1 involves 2 UNC45A monomers per HSP90AB1 dimer.

It localises to the cytoplasm. The protein resides in the perinuclear region. Its subcellular location is the nucleus. May act as co-chaperone for HSP90 (Potential). Prevents the stimulation of HSP90AB1 ATPase activity by AHSA1. Positive factor in promoting PGR function in the cell. May be necessary for proper folding of myosin (Potential). Necessary for normal cell proliferation. Necessary for normal myotube formation and myosin accumulation during muscle cell development. May play a role in erythropoiesis in stroma cells in the spleen. This Rattus norvegicus (Rat) protein is Protein unc-45 homolog A (Unc45a).